Reading from the N-terminus, the 332-residue chain is MKVTFEELKGAFYRVLRSRNIAEDTADACAEMFARTTESGVYSHGVNRFPRFIQQLDNGDIIPDAKPQRVTSLGAIEQWDAQRAIGNLTAKKMMDRAIELASDHGIGLVALRNANHWMRGGSYGWQAAEKGYIGICWTNSIAVMPPWGAKECRIGTNPLIVAIPSTPITMVDMSMSMFSYGMLEVNRLAGRELPVDGGFDDNGQLTKEPGVIEKNRRILPMGYWKGSGLSIVLDMIATLLSNGSSVAEVTQENSDEYGVSQIFIAIEVDKLIDGATRDAKLQRIMDFITTAERADDNVAIRLPGHEFTKLLDDNRRHGITVDDSVWAKIQAL.

Residue His44 is the Proton donor of the active site. NAD(+)-binding positions include 168–174 (ITMVDMS), 224–225 (WK), and 304–306 (GHE).

Belongs to the LDH2/MDH2 oxidoreductase family. DlgD subfamily. Homodimer.

It is found in the cytoplasm. It carries out the reaction 3-dehydro-L-gulonate + NAD(+) = 2,3-dioxo-L-gulonate + NADH + H(+). It catalyses the reaction 3-dehydro-L-gulonate + NADP(+) = 2,3-dioxo-L-gulonate + NADPH + H(+). Its function is as follows. Catalyzes the reduction of 2,3-diketo-L-gulonate in the presence of NADH, to form 3-keto-L-gulonate. The polypeptide is 2,3-diketo-L-gulonate reductase (Salmonella paratyphi A (strain ATCC 9150 / SARB42)).